Reading from the N-terminus, the 359-residue chain is Norspermidine sensor (359 aa).

Residues 1 to 33 form the signal peptide; sequence MTNFCNEWVSYSQMIKRFLSLMVLNTVCYQASA.

This sequence belongs to the bacterial solute-binding protein PotD/PotF family.

It is found in the periplasm. In terms of biological role, acts as a sensor of norspermidine and enhances biofilm formation. When complexed to norspermidine, could interact with the periplasmic portion of MbaA to regulate its enzymatic activity. The protein is Norspermidine sensor (nspS) of Vibrio cholerae serotype O1 (strain ATCC 39315 / El Tor Inaba N16961).